The chain runs to 647 residues: Frizzled-1 (647 aa).

A signal peptide spans Met-1–Gly-69. Topologically, residues Gln-73 to Trp-322 are extracellular. Residues Ala-74–Gly-104 form a disordered region. One can recognise an FZ domain in the interval Pro-111–Gln-230. 5 disulfide bridges follow: Cys-116–Cys-177, Cys-124–Cys-170, Cys-161–Cys-198, Cys-187–Cys-227, and Cys-191–Cys-215. The N-linked (GlcNAc...) asparagine glycan is linked to Asn-130. A glycan (N-linked (GlcNAc...) asparagine) is linked at Asn-231. Residues Ile-323–Val-343 traverse the membrane as a helical segment. Topologically, residues Asp-344–Pro-354 are cytoplasmic. The helical transmembrane segment at Ile-355 to Leu-375 threads the bilayer. Over Glu-376–Cys-402 the chain is Extracellular. Residues Thr-403–Leu-423 form a helical membrane-spanning segment. Topologically, residues Ser-424–Gln-445 are cytoplasmic. The helical transmembrane segment at Tyr-446–Gly-466 threads the bilayer. The Extracellular segment spans residues Gln-467–Gly-489. Residues Phe-490–Phe-510 form a helical membrane-spanning segment. Topologically, residues Val-511 to Arg-536 are cytoplasmic. Residues Ile-537–Tyr-557 form a helical membrane-spanning segment. The Extracellular segment spans residues Glu-558–Thr-601. A helical transmembrane segment spans residues Val-602–Trp-622. Residues Ser-623 to Val-647 are Cytoplasmic-facing. The Lys-Thr-X-X-X-Trp motif, mediates interaction with the PDZ domain of Dvl family members motif lies at Lys-625–Trp-630. Positions Thr-645 to Val-647 match the PDZ-binding motif.

It belongs to the G-protein coupled receptor Fz/Smo family. In terms of assembly, interacts with MYOC. Interacts with WNT7B. (Microbial infection) Interacts with C.difficile toxin TcdB; frizzled receptors constitute the major host receptors for TcdB in the colonic epithelium. Ubiquitinated by ZNRF3, leading to its degradation by the proteasome. In terms of tissue distribution, expressed in adult heart, placenta, lung, kidney, pancreas, prostate, and ovary and in fetal lung and kidney.

It is found in the cell membrane. Receptor for Wnt proteins. Activated by WNT3A, WNT3, WNT1 and to a lesser extent WNT2, but apparently not by WNT4, WNT5A, WNT5B, WNT6, WNT7A or WNT7B. Contradictory results showing activation by WNT7B have been described for mouse. Functions in the canonical Wnt/beta-catenin signaling pathway. The canonical Wnt/beta-catenin signaling pathway leads to the activation of disheveled proteins, inhibition of GSK-3 kinase, nuclear accumulation of beta-catenin and activation of Wnt target genes. A second signaling pathway involving PKC and calcium fluxes has been seen for some family members, but it is not yet clear if it represents a distinct pathway or if it can be integrated in the canonical pathway, as PKC seems to be required for Wnt-mediated inactivation of GSK-3 kinase. Both pathways seem to involve interactions with G-proteins. May be involved in transduction and intercellular transmission of polarity information during tissue morphogenesis and/or in differentiated tissues. In terms of biological role, (Microbial infection) Acts as a receptor for C.difficile toxin TcdB in the colonic epithelium. The protein is Frizzled-1 (FZD1) of Homo sapiens (Human).